Reading from the N-terminus, the 519-residue chain is Glutamate--cysteine ligase (519 aa).

Belongs to the glutamate--cysteine ligase type 1 family. Type 1 subfamily.

It catalyses the reaction L-cysteine + L-glutamate + ATP = gamma-L-glutamyl-L-cysteine + ADP + phosphate + H(+). The protein operates within sulfur metabolism; glutathione biosynthesis; glutathione from L-cysteine and L-glutamate: step 1/2. The sequence is that of Glutamate--cysteine ligase from Erwinia tasmaniensis (strain DSM 17950 / CFBP 7177 / CIP 109463 / NCPPB 4357 / Et1/99).